Consider the following 199-residue polypeptide: Holliday junction branch migration complex subunit RuvA (199 aa).

Residues 1 to 63 form a domain I region; sequence MIAYIEGKLA…EDAHTLFGFA (63 aa). Residues 64–142 are domain II; that stretch reads DLMEKEMFLH…KDALLAGSDS (79 aa). Residues 143 to 151 form a flexible linker region; it reads KQNFSVSHN. Positions 151-199 are domain III; sequence NSIRSEALTALITLGFTKTVAEKNLDLILKGNSNSFTLEDLIKQALKMS.

It belongs to the RuvA family. As to quaternary structure, homotetramer. Forms an RuvA(8)-RuvB(12)-Holliday junction (HJ) complex. HJ DNA is sandwiched between 2 RuvA tetramers; dsDNA enters through RuvA and exits via RuvB. An RuvB hexamer assembles on each DNA strand where it exits the tetramer. Each RuvB hexamer is contacted by two RuvA subunits (via domain III) on 2 adjacent RuvB subunits; this complex drives branch migration. In the full resolvosome a probable DNA-RuvA(4)-RuvB(12)-RuvC(2) complex forms which resolves the HJ.

It localises to the cytoplasm. In terms of biological role, the RuvA-RuvB-RuvC complex processes Holliday junction (HJ) DNA during genetic recombination and DNA repair, while the RuvA-RuvB complex plays an important role in the rescue of blocked DNA replication forks via replication fork reversal (RFR). RuvA specifically binds to HJ cruciform DNA, conferring on it an open structure. The RuvB hexamer acts as an ATP-dependent pump, pulling dsDNA into and through the RuvAB complex. HJ branch migration allows RuvC to scan DNA until it finds its consensus sequence, where it cleaves and resolves the cruciform DNA. This Cytophaga hutchinsonii (strain ATCC 33406 / DSM 1761 / CIP 103989 / NBRC 15051 / NCIMB 9469 / D465) protein is Holliday junction branch migration complex subunit RuvA.